Here is a 278-residue protein sequence, read N- to C-terminus: uncharacterized protein (278 aa).

Residues 112-113 (HI), 191-193 (VGR), and aspartate 217 contribute to the NAD(+) site. Arginine 193 is a catalytic residue. Residue glutamate 222 is part of the active site. Histidine 241 functions as the Proton donor in the catalytic mechanism. 241–244 (HSAG) serves as a coordination point for NAD(+).

Belongs to the D-isomer specific 2-hydroxyacid dehydrogenase family.

This is an uncharacterized protein from Streptomyces coelicolor.